The following is a 1049-amino-acid chain: Isoleucine--tRNA ligase (1049 aa).

The short motif at 48–58 (PYTTGRIHLGT) is the 'HIGH' region element. Residues 596–600 (KMSKS) carry the 'KMSKS' region motif. Lysine 599 provides a ligand contact to ATP.

This sequence belongs to the class-I aminoacyl-tRNA synthetase family. IleS type 2 subfamily. As to quaternary structure, monomer. The cofactor is Zn(2+).

The protein resides in the cytoplasm. The catalysed reaction is tRNA(Ile) + L-isoleucine + ATP = L-isoleucyl-tRNA(Ile) + AMP + diphosphate. In terms of biological role, catalyzes the attachment of isoleucine to tRNA(Ile). As IleRS can inadvertently accommodate and process structurally similar amino acids such as valine, to avoid such errors it has two additional distinct tRNA(Ile)-dependent editing activities. One activity is designated as 'pretransfer' editing and involves the hydrolysis of activated Val-AMP. The other activity is designated 'posttransfer' editing and involves deacylation of mischarged Val-tRNA(Ile). This chain is Isoleucine--tRNA ligase, found in Methanothrix thermoacetophila (strain DSM 6194 / JCM 14653 / NBRC 101360 / PT) (Methanosaeta thermophila).